We begin with the raw amino-acid sequence, 275 residues long: Large ribosomal subunit protein uL2 (275 aa).

Disordered stretches follow at residues 24-48 and 224-264; these read LTTD…NAGD and VMNP…NKRT. Over residues 31-42 the composition is skewed to basic residues; sequence KPLTKTKQRTGG.

The protein belongs to the universal ribosomal protein uL2 family. As to quaternary structure, part of the 50S ribosomal subunit. Forms a bridge to the 30S subunit in the 70S ribosome.

Its function is as follows. One of the primary rRNA binding proteins. Required for association of the 30S and 50S subunits to form the 70S ribosome, for tRNA binding and peptide bond formation. It has been suggested to have peptidyltransferase activity; this is somewhat controversial. Makes several contacts with the 16S rRNA in the 70S ribosome. The sequence is that of Large ribosomal subunit protein uL2 from Koribacter versatilis (strain Ellin345).